The sequence spans 112 residues: ATP synthase subunit c (112 aa).

The next 2 helical transmembrane spans lie at F36 to M56 and M81 to I101.

The protein belongs to the ATPase C chain family. F-type ATPases have 2 components, F(1) - the catalytic core - and F(0) - the membrane proton channel. F(1) has five subunits: alpha(3), beta(3), gamma(1), delta(1), epsilon(1). F(0) has three main subunits: a(1), b(2) and c(10-14). The alpha and beta chains form an alternating ring which encloses part of the gamma chain. F(1) is attached to F(0) by a central stalk formed by the gamma and epsilon chains, while a peripheral stalk is formed by the delta and b chains.

It is found in the cell inner membrane. Functionally, f(1)F(0) ATP synthase produces ATP from ADP in the presence of a proton or sodium gradient. F-type ATPases consist of two structural domains, F(1) containing the extramembraneous catalytic core and F(0) containing the membrane proton channel, linked together by a central stalk and a peripheral stalk. During catalysis, ATP synthesis in the catalytic domain of F(1) is coupled via a rotary mechanism of the central stalk subunits to proton translocation. Key component of the F(0) channel; it plays a direct role in translocation across the membrane. A homomeric c-ring of between 10-14 subunits forms the central stalk rotor element with the F(1) delta and epsilon subunits. This Campylobacter jejuni subsp. jejuni serotype O:6 (strain 81116 / NCTC 11828) protein is ATP synthase subunit c.